We begin with the raw amino-acid sequence, 601 residues long: Glutathione-regulated potassium-efflux system protein KefB (601 aa).

The next 13 helical transmembrane spans lie at 4–24, 29–49, 55–75, 87–107, 115–135, 152–172, 177–197, 207–227, 230–250, 268–288, 291–311, 324–344, and 356–376; these read SDFL…VPLA, IGAV…GLGF, EILH…GLEL, IFGV…GLLM, AAVV…LQLM, VLLF…LLAG, HFDW…LIGG, FIAA…LVLG, LFMD…GVLL, GLLL…GVLY, LLWV…VLYL, MQFA…FSTA, and ALLL…MKLV. In terms of domain architecture, RCK N-terminal spans 400-519; the sequence is KPQVIVVGFG…AGVTQFSRET (120 aa).

This sequence belongs to the monovalent cation:proton antiporter 2 (CPA2) transporter (TC 2.A.37) family. KefB subfamily. As to quaternary structure, interacts with the regulatory subunit KefG.

It is found in the cell inner membrane. Functionally, pore-forming subunit of a potassium efflux system that confers protection against electrophiles. Catalyzes K(+)/H(+) antiport. This chain is Glutathione-regulated potassium-efflux system protein KefB, found in Escherichia coli (strain SMS-3-5 / SECEC).